The primary structure comprises 107 residues: uncharacterized protein (107 aa).

The segment at 88-107 (GSTPWGSGRQVNAARPIGGR) is disordered.

Its subcellular location is the virion. This is an uncharacterized protein from Acanthamoeba polyphaga (Amoeba).